An 85-amino-acid polypeptide reads, in one-letter code: Protein WIR1B (85 aa).

At 1 to 12 (MASHSAAGRRPT) the chain is on the cytoplasmic side. A helical transmembrane segment spans residues 13–34 (ALVHIALFVAIAAVIINSSVCL). Residues 35-85 (GAAVHDAATSGTGALDPNVPAVPTPGGAGQPYTGRGCRTVYGCKPPAGSQP) lie on the Extracellular side of the membrane.

It localises to the membrane. Its function is as follows. Associated with pathogen defense. The chain is Protein WIR1B (WIR1B) from Triticum aestivum (Wheat).